The following is a 242-amino-acid chain: MLTKFLPLLLLLLPGCALCNSDGSQSLHMLQISYFQDNHHVRHQGNASLGKLLTHTLEGPSQNVTILQLQPWQDPESWERTESGLQIYLTQFESLVKLVYRERKENVFFPLTVSCSLGCELPEEEEEGSEPHVFFDVAVNGSAFVSFRPKTAVWVSGSQEPSKAANFTLKQLNAYNRTRYELQEFLQDTCVEFLENHITTQNMKGSQTGRSYTSLVLGILMGCFIIAGVAVGIFMCTSGRRC.

Positions 1–17 (MLTKFLPLLLLLLPGCA) are cleaved as a signal peptide. Residues 18–214 (LCNSDGSQSL…GSQTGRSYTS (197 aa)) lie on the Extracellular side of the membrane. Residues Asn46, Asn63, Asn140, Asn166, and Asn176 are each glycosylated (N-linked (GlcNAc...) asparagine). 2 disulfide bridges follow: Cys119–Cys190 and Cys223–Cys236. A helical transmembrane segment spans residues 215–235 (LVLGILMGCFIIAGVAVGIFM). At 236 to 242 (CTSGRRC) the chain is on the cytoplasmic side.

Expressed in endothelial cells.

Its subcellular location is the membrane. Binds activated protein C. Enhances protein C activation by the thrombin-thrombomodulin complex; plays a role in the protein C pathway controlling blood coagulation. In Mus musculus (Mouse), this protein is Endothelial protein C receptor (Procr).